Reading from the N-terminus, the 119-residue chain is Phytosulfokines 2 (119 aa).

Residues 1–34 form the signal peptide; the sequence is MSTTRGVSSSSAAAALALLLLFALCFFSFHFAAA. A propeptide spanning residues 35-109 is cleaved from the precursor; sequence ARAVPRDEHQ…RRLLSDAHLD (75 aa). Sulfotyrosine occurs at positions 110 and 112. Positions 115-119 are excised as a propeptide; sequence HKNKP.

Belongs to the phytosulfokine family. Post-translationally, sulfation is important for activity and for the binding to a putative membrane receptor. PSK-alpha is produced by endopeptidase digestion. PSK-beta is produced from PSK-alpha by exopeptidase digestion.

It is found in the secreted. In terms of biological role, promotes plant cell differentiation, organogenesis and somatic embryogenesis as well as cell proliferation. The protein is Phytosulfokines 2 (PSK2) of Oryza sativa subsp. japonica (Rice).